The chain runs to 182 residues: UPF0149 protein HI_0817 (182 aa).

It belongs to the UPF0149 family.

This chain is UPF0149 protein HI_0817, found in Haemophilus influenzae (strain ATCC 51907 / DSM 11121 / KW20 / Rd).